Reading from the N-terminus, the 533-residue chain is uncharacterized protein (533 aa).

The first 21 residues, 1 to 21 (MVKVWKIGFGVFLPTALLFSA), serve as a signal peptide directing secretion. Cys22 is lipidated: N-palmitoyl cysteine. A lipid anchor (S-diacylglycerol cysteine) is attached at Cys22. Positions 91–111 (LSKNKEGQTASQTRSSSEQTT) are disordered. Residues 97–111 (GQTASQTRSSSEQTT) show a composition bias toward polar residues.

This sequence belongs to the MG067/MG068/MG395 family.

The protein resides in the cell membrane. This is an uncharacterized protein from Mycoplasma pneumoniae (strain ATCC 29342 / M129 / Subtype 1) (Mycoplasmoides pneumoniae).